A 346-amino-acid chain; its full sequence is MLAARLVCLRTLPSRVFQPTFITKASPLVKNSITKNQWLLTPSREYATKTRIRTHRGKTGQELKEAALEPSLEKVFKIDQMGKWFVAGGAAVGLGALCYYGLGMSNEIGAIEKAVIWPQYVKDRIHSTYMYLAGSIGLTALSALALARSPALMNFMMTGSWMTIGATFAAMIGAGMLVQSISYEQSPGPKHLAWMLHSGVMGAVVAPLTILGGPLLLRAAWYTAGIVGGLSTVAMCAPSEKFLNMGAPLGVGLGLVFASSLGSMFLPPTSVAGATLYSVAMYGGLVLFSMFLLYDTQKVVKRAEITPAYGAQKYDPINSMLTIYMDTLNIFMRVATMLATGSNRKK.

The transit peptide at 1–45 (MLAARLVCLRTLPSRVFQPTFITKASPLVKNSITKNQWLLTPSRE) directs the protein to the mitochondrion. The Mitochondrial matrix portion of the chain corresponds to 46 to 83 (YATKTRIRTHRGKTGQELKEAALEPSLEKVFKIDQMGK). The helical transmembrane segment at 84–104 (WFVAGGAAVGLGALCYYGLGM) threads the bilayer. The Mitochondrial intermembrane portion of the chain corresponds to 105–126 (SNEIGAIEKAVIWPQYVKDRIH). A helical membrane pass occupies residues 127–147 (STYMYLAGSIGLTALSALALA). The Mitochondrial matrix portion of the chain corresponds to 148 to 160 (RSPALMNFMMTGS). The helical transmembrane segment at 161 to 181 (WMTIGATFAAMIGAGMLVQSI) threads the bilayer. Residues 182 to 191 (SYEQSPGPKH) are Mitochondrial intermembrane-facing. The helical transmembrane segment at 192–212 (LAWMLHSGVMGAVVAPLTILG) threads the bilayer. The Mitochondrial matrix segment spans residues 213-214 (GP). The chain crosses the membrane as a helical span at residues 215-235 (LLLRAAWYTAGIVGGLSTVAM). The Mitochondrial intermembrane segment spans residues 236–245 (CAPSEKFLNM). The helical transmembrane segment at 246-266 (GAPLGVGLGLVFASSLGSMFL) threads the bilayer. Over 267–272 (PPTSVA) the chain is Mitochondrial matrix. A helical transmembrane segment spans residues 273–293 (GATLYSVAMYGGLVLFSMFLL). The Mitochondrial intermembrane segment spans residues 294–346 (YDTQKVVKRAEITPAYGAQKYDPINSMLTIYMDTLNIFMRVATMLATGSNRKK).

It belongs to the BI1 family. Interacts with LETM1 and AFG3L2. In terms of processing, undergoes AFG3L2-mediated proteolytic degradation, upon hyperpolarization of mitochondria.

Its subcellular location is the mitochondrion inner membrane. Functionally, plays an important role in maintenance of mitochondrial morphology and in mediating either calcium or potassium/proton antiport. Mediates proton-dependent calcium efflux from mitochondrion. Also functions as an electroneutral mitochondrial proton/potassium exchanger. Required for the mitochondrial tubular network and cristae organization. Involved in apoptotic release of cytochrome c. Inhibits AFG3L2 proteolytic activity, stimulating respiration and stabilizing respiratory enzymes in actively respiring mitochondria. However, when mitochondria become hyperpolarized, GHITM loses its inhibitory activity toward AFG3L2 and the now active AFG3L2 turns first on GHITM and, if hyperpolarization persists, on other proteins of the mitochondria, leading to a broad remodeling of the proteome. The chain is Growth hormone-inducible transmembrane protein (Ghitm) from Rattus norvegicus (Rat).